We begin with the raw amino-acid sequence, 550 residues long: Methionine--tRNA ligase (550 aa).

Residues 14–24 (PYANGSLHIGH) carry the 'HIGH' region motif. Zn(2+) is bound by residues C145, C148, C158, and C161. A 'KMSKS' region motif is present at residues 331–335 (KMSKS). K334 is a binding site for ATP.

The protein belongs to the class-I aminoacyl-tRNA synthetase family. MetG type 1 subfamily. Monomer. Zn(2+) is required as a cofactor.

The protein resides in the cytoplasm. The catalysed reaction is tRNA(Met) + L-methionine + ATP = L-methionyl-tRNA(Met) + AMP + diphosphate. Its function is as follows. Is required not only for elongation of protein synthesis but also for the initiation of all mRNA translation through initiator tRNA(fMet) aminoacylation. The polypeptide is Methionine--tRNA ligase (Wigglesworthia glossinidia brevipalpis).